The chain runs to 428 residues: Adenosylhomocysteinase (428 aa).

Substrate is bound by residues threonine 62, aspartate 134, and glutamate 159. Threonine 160–threonine 162 contacts NAD(+). Substrate is bound by residues lysine 189 and aspartate 193. NAD(+) is bound by residues asparagine 194, glycine 223–glycine 228, glutamate 246, asparagine 281, serine 302–histidine 304, and asparagine 349.

Belongs to the adenosylhomocysteinase family. Requires NAD(+) as cofactor.

It is found in the cytoplasm. The enzyme catalyses S-adenosyl-L-homocysteine + H2O = L-homocysteine + adenosine. It functions in the pathway amino-acid biosynthesis; L-homocysteine biosynthesis; L-homocysteine from S-adenosyl-L-homocysteine: step 1/1. Functionally, may play a key role in the regulation of the intracellular concentration of adenosylhomocysteine. This Gloeobacter violaceus (strain ATCC 29082 / PCC 7421) protein is Adenosylhomocysteinase.